The chain runs to 459 residues: 2-(3-amino-3-carboxypropyl)histidine synthase subunit 1 (459 aa).

Residues 1 to 68 form a disordered region; it reads MEDDRAQVDL…AGANTSIEDS (68 aa). Residues 41-61 are compositionally biased toward low complexity; that stretch reads SAAAGKSSSSSSNSTSQPAGA. 3 residues coordinate [4Fe-4S] cluster: cysteine 165, cysteine 268, and cysteine 403.

The protein belongs to the DPH1/DPH2 family. DPH1 subfamily. Component of the 2-(3-amino-3-carboxypropyl)histidine synthase complex composed of dph-1, dph-2, dph-3 and a NADH-dependent reductase, predominantly cbr-1. It depends on [4Fe-4S] cluster as a cofactor.

It is found in the cytoplasm. The enzyme catalyses L-histidyl-[translation elongation factor 2] + S-adenosyl-L-methionine = 2-[(3S)-amino-3-carboxypropyl]-L-histidyl-[translation elongation factor 2] + S-methyl-5'-thioadenosine + H(+). It functions in the pathway protein modification; peptidyl-diphthamide biosynthesis. Functionally, catalyzes the first step of diphthamide biosynthesis, a post-translational modification of histidine which occurs in elongation factor 2. Dph-1 and dph-2 transfer a 3-amino-3-carboxypropyl (ACP) group from S-adenosyl-L-methionine (SAM) to a histidine residue, the reaction is assisted by a reduction system comprising dph-3 and a NADH-dependent reductase, predominantly cbr-1. The chain is 2-(3-amino-3-carboxypropyl)histidine synthase subunit 1 (dph-1) from Neurospora crassa (strain ATCC 24698 / 74-OR23-1A / CBS 708.71 / DSM 1257 / FGSC 987).